Here is a 1045-residue protein sequence, read N- to C-terminus: Tyrosine-protein kinase-like otk (1045 aa).

The N-terminal stretch at 1–25 is a signal peptide; that stretch reads MPIVMDMNMLLMLSLAFTVMAPASA. 5 consecutive Ig-like C2-type domains span residues 26-116, 115-200, 260-373, 376-469, and 474-564; these read SSSR…AKLS, LSVI…RVMS, PEGL…APVN, PGAL…VAIN, and PRFS…VRLL. The Extracellular segment spans residues 26–587; it reads SSSRFTQPPQ…AGDGFLVTRA (562 aa). 4 disulfide bridges follow: cysteine 49–cysteine 97, cysteine 139–cysteine 189, cysteine 285–cysteine 362, and cysteine 406–cysteine 453. N-linked (GlcNAc...) asparagine glycans are attached at residues asparagine 344, asparagine 424, asparagine 435, asparagine 442, asparagine 450, asparagine 463, asparagine 518, and asparagine 530. A disulfide bridge links cysteine 496 with cysteine 548. The helical transmembrane segment at 588–608 threads the bilayer; it reads VLITMTVALAYIVLVVGLMLW. Residues 609-1045 lie on the Cytoplasmic side of the membrane; sequence CRYRRQARKA…LSKAMQAAEK (437 aa). The segment at 628–676 is disordered; that stretch reads AGGDQAESGKNTEQEPCLSKQRNGHGKSRTAANGDAQKSDDTACSQQSK. Serine 681 carries the phosphoserine modification. Residues 695–1040 enclose the Protein kinase; inactive domain; the sequence is LSELIQIGRG…QLGAALSKAM (346 aa). The tract at residues 722–790 is disordered; it reads ASPSDKDADT…QPQEQAQSES (69 aa). The span at 725-736 shows a compositional bias: basic and acidic residues; sequence SDKDADTEKQHS. Residues 743-752 show a composition bias toward gly residues; sequence GASGASGCGS. Residues 771-782 show a composition bias toward acidic residues; the sequence is DDIEEIKEEEQP.

The protein belongs to the protein kinase superfamily. Tyr protein kinase family. Insulin receptor subfamily. As to quaternary structure, interacts with plexA; component of a receptor complex that mediates the repulsive signaling in response to Semaphorin ligands.

The protein resides in the cell membrane. Acts as a calcium-dependent, homophilic cell adhesion molecule that regulates neural recognition during the development of the nervous system. Component of the repulsive Plexin signaling response to regulate motor axon guidance at the embryonic stage. Also component of a receptor complex that is required in the adult visual system to innervate the lamina layer; specific targeting of R1-R6 axons. The protein is Tyrosine-protein kinase-like otk of Drosophila mojavensis (Fruit fly).